Consider the following 132-residue polypeptide: Small ribosomal subunit protein uS8 (132 aa).

This sequence belongs to the universal ribosomal protein uS8 family. As to quaternary structure, part of the 30S ribosomal subunit. Contacts proteins S5 and S12.

In terms of biological role, one of the primary rRNA binding proteins, it binds directly to 16S rRNA central domain where it helps coordinate assembly of the platform of the 30S subunit. This chain is Small ribosomal subunit protein uS8, found in Mycobacterium avium (strain 104).